Reading from the N-terminus, the 109-residue chain is MTMKLIWDKFYVSIIFVLTCIVLGIILMCTVVGGGNDYSEVNVSEGDSLWALADQYAGKSDMAKADFVSWVEKENNLADGHVEAGESVVIPVHKTKLIKSDSTIQLANQ.

The LysM domain maps to 39–90 (SEVNVSEGDSLWALADQYAGKSDMAKADFVSWVEKENNLADGHVEAGESVVI).

It belongs to the YneA family.

The protein resides in the cytoplasm. Its function is as follows. Inhibits cell division during the SOS response. Affects a later stage of the cell division protein assembly, after the assembly of the Z ring, by probably suppressing recruitment of FtsL and/or DivIC to the division machinery. The protein is Cell division suppressor protein YneA of Listeria monocytogenes serotype 4b (strain F2365).